Consider the following 234-residue polypeptide: Small ribosomal subunit protein eS1y (234 aa).

Positions 1–18 (MAVGKNKRISKGKKGGKK) are enriched in basic residues. The tract at residues 1–20 (MAVGKNKRISKGKKGGKKKA) is disordered.

It belongs to the eukaryotic ribosomal protein eS1 family. Component of the small ribosomal subunit. Mature ribosomes consist of a small (40S) and a large (60S) subunit. The 40S subunit contains about 33 different proteins and 1 molecule of RNA (18S). The 60S subunit contains about 49 different proteins and 3 molecules of RNA (25S, 5.8S and 5S).

The protein resides in the cytoplasm. The polypeptide is Small ribosomal subunit protein eS1y (Vitis vinifera (Grape)).